The primary structure comprises 423 residues: F-box protein At1g52495 (423 aa).

In terms of domain architecture, F-box spans 49–95; that stretch reads KLKDVHLPLDLIVEILKKLPTKSLMRFRCVSKPWSFIISKRRDFVES.

In Arabidopsis thaliana (Mouse-ear cress), this protein is F-box protein At1g52495.